Reading from the N-terminus, the 297-residue chain is Large ribosomal subunit protein uL18 (297 aa).

Residue G2 is modified to N-acetylglycine. 2 positions are modified to N6-acetyllysine: K5 and K48. At S185 the chain carries Phosphoserine. K220 carries the post-translational modification N6-acetyllysine; alternate. A Glycyl lysine isopeptide (Lys-Gly) (interchain with G-Cter in SUMO1); alternate cross-link involves residue K220. K220 participates in a covalent cross-link: Glycyl lysine isopeptide (Lys-Gly) (interchain with G-Cter in SUMO2); alternate. The residue at position 232 (T232) is a Phosphothreonine. The interval 253-297 (YEKKPKREVKKKRWNRPKMSLAQKKDRVAQKKASFLRAQERAAES) is disordered. The span at 258 to 268 (KREVKKKRWNR) shows a compositional bias: basic residues. S272 bears the Phosphoserine mark.

This sequence belongs to the universal ribosomal protein uL18 family. Component of the large ribosomal subunit (LSU). Part of the 5S RNP complex, which is a LSU subcomplex composed of the 5S RNA, RPL5 and RPL11. Component of a hexameric 5S RNP precursor complex, composed of 5S RNA, RRS1, RPF2/BXDC1, RPL5, RPL11 and HEATR3; this complex acts as a precursor for ribosome assembly. Interacts with NVL in an ATP-dependent manner. Interacts with RRP1B. Interacts with IPO5, IPO7 and KPNB1; these interactions may be involved in RPL5 nuclear import for the assembly of ribosomal subunits. Interacts with RRP1B.

Its subcellular location is the cytoplasm. The protein localises to the nucleus. It is found in the nucleolus. Component of the ribosome, a large ribonucleoprotein complex responsible for the synthesis of proteins in the cell. The small ribosomal subunit (SSU) binds messenger RNAs (mRNAs) and translates the encoded message by selecting cognate aminoacyl-transfer RNA (tRNA) molecules. The large subunit (LSU) contains the ribosomal catalytic site termed the peptidyl transferase center (PTC), which catalyzes the formation of peptide bonds, thereby polymerizing the amino acids delivered by tRNAs into a polypeptide chain. The nascent polypeptides leave the ribosome through a tunnel in the LSU and interact with protein factors that function in enzymatic processing, targeting, and the membrane insertion of nascent chains at the exit of the ribosomal tunnel. As part of the 5S RNP/5S ribonucleoprotein particle it is an essential component of the LSU, required for its formation and the maturation of rRNAs. It also couples ribosome biogenesis to p53/TP53 activation. As part of the 5S RNP it accumulates in the nucleoplasm and inhibits MDM2, when ribosome biogenesis is perturbed, mediating the stabilization and the activation of TP53. The polypeptide is Large ribosomal subunit protein uL18 (Rpl5) (Rattus norvegicus (Rat)).